We begin with the raw amino-acid sequence, 1244 residues long: Protein STU1 (1244 aa).

2 HEAT repeats span residues 87 to 124 (LQGR…AASA) and 159 to 196 (LLFR…SAPP). Positions 232 to 243 (ETSSSFQSQSRS) are enriched in low complexity. Disordered regions lie at residues 232–326 (ETSS…GEGV), 561–758 (LLER…EPDV), and 795–998 (AFQG…DPVK). Composition is skewed to polar residues over residues 261–271 (RSQSVLSMRSH), 287–312 (KSQS…SSES), 574–591 (ASQS…STKS), and 607–622 (ASSN…QSSF). Low complexity-rich tracts occupy residues 652-663 (SASLSSAPMRPA), 690-703 (AQSK…SPQK), and 837-850 (PPSR…YSSR). 2 stretches are compositionally biased toward basic and acidic residues: residues 863-872 (LDSRRSRGES) and 979-998 (KVEG…DPVK). HEAT repeat units lie at residues 1038–1075 (TKYE…VLVT) and 1126–1163 (CNPP…SGLL).

Belongs to the CLASP family. In terms of assembly, interacts with microtubules.

Its subcellular location is the cytoplasm. The protein localises to the cytoskeleton. The protein resides in the nucleus. It is found in the spindle. Functionally, microtubule binding protein that promotes the stabilization of dynamic microtubules. Required for mitotic spindle formation. The polypeptide is Protein STU1 (STU1) (Coccidioides immitis (strain RS) (Valley fever fungus)).